A 303-amino-acid polypeptide reads, in one-letter code: tRNA (guanine-N(7)-)-methyltransferase (303 aa).

Residues 1–64 (MPKPHQVQVI…STSDKISLPR (64 aa)) form a disordered region. A compositionally biased stretch (basic and acidic residues) spans 10-38 (IKDRETQLREQQEAESKRRTYRDVKEETR). Residues Gly-118, 141–142 (EI), 177–178 (NA), and Cys-197 each bind S-adenosyl-L-methionine. The active site involves Asp-200. 275–277 (TEE) contributes to the S-adenosyl-L-methionine binding site.

The protein belongs to the class I-like SAM-binding methyltransferase superfamily. TrmB family. As to quaternary structure, forms a complex with TRM82.

The protein localises to the nucleus. It catalyses the reaction guanosine(46) in tRNA + S-adenosyl-L-methionine = N(7)-methylguanosine(46) in tRNA + S-adenosyl-L-homocysteine. It participates in tRNA modification; N(7)-methylguanine-tRNA biosynthesis. In terms of biological role, catalyzes the formation of N(7)-methylguanine at position 46 (m7G46) in tRNA. The sequence is that of tRNA (guanine-N(7)-)-methyltransferase from Scheffersomyces stipitis (strain ATCC 58785 / CBS 6054 / NBRC 10063 / NRRL Y-11545) (Yeast).